A 186-amino-acid polypeptide reads, in one-letter code: Ribosome maturation factor RimM (186 aa).

Positions 100-182 (NEGEYHVSDL…RIEINPPVGL (83 aa)) constitute a PRC barrel domain.

This sequence belongs to the RimM family. As to quaternary structure, binds ribosomal protein uS19.

It is found in the cytoplasm. Its function is as follows. An accessory protein needed during the final step in the assembly of 30S ribosomal subunit, possibly for assembly of the head region. Essential for efficient processing of 16S rRNA. May be needed both before and after RbfA during the maturation of 16S rRNA. It has affinity for free ribosomal 30S subunits but not for 70S ribosomes. This chain is Ribosome maturation factor RimM, found in Rippkaea orientalis (strain PCC 8801 / RF-1) (Cyanothece sp. (strain PCC 8801)).